The following is a 459-amino-acid chain: NADH oxidase (459 aa).

Asparagine 10 contacts FAD. Catalysis depends on histidine 11, which acts as the Proton acceptor. The FAD site is built by alanine 12, aspartate 34, glutamine 35, cysteine 44, valine 81, alanine 110, serine 113, lysine 143, and tyrosine 172. The active-site Redox-active is the cysteine 44. Cysteine sulfinic acid (-SO2H) is present on cysteine 44. NAD(+)-binding residues include isoleucine 173, aspartate 192, tyrosine 201, and glycine 256. An FAD-binding site is contributed by aspartate 294. Residue alanine 310 participates in NAD(+) binding. Positions 311, 312, and 313 each coordinate FAD. Glycine 341 is a binding site for NAD(+). Phenylalanine 439 serves as a coordination point for FAD.

This sequence belongs to the class-III pyridine nucleotide-disulfide oxidoreductase family. Requires FAD as cofactor.

The protein localises to the secreted. Its subcellular location is the cell wall. It carries out the reaction 2 NADH + O2 + 2 H(+) = 2 NAD(+) + 2 H2O. Functionally, catalyzes the four-electron reduction of molecular oxygen to water. Plays a role in redox balance maintenance. May be involved in mediating bacterial adhesion to host cells. May be considered a potential virulence factor. The sequence is that of NADH oxidase from Streptococcus pneumoniae serotype 4 (strain ATCC BAA-334 / TIGR4).